The following is a 723-amino-acid chain: MAEYTRLHNALALIRLRNPPVNAISTTLLRDIKEGLQKAVIDHTIKAIVICGAEGKFSAGADIRGFSAPRTFGLTLGHVVDEIQRNEKPVVAAIQGMAFGGGLELALGCHYRIAHAEAQVGLPEVTLGLLPGARGTQLLPRLTGVPAALDLITSGRRILADEALKLGILDKVVNSDPVEEAIRFAQRVSDQPLESRRLCNKPIQSLPNMDSIFSEALLKMRRQHPGCLAQEACVRAVQAAVQYPYEVGIKKEEELFLYLLQSGQARALQYAFFAERKANKWSTPSGASWKTASARPVSSVGVVGLGTMGRGIVISFARARIPVIAVDSDKNQLATANKMITSVLEKEASKMQQSGHPWSGPKPRLTSSVKELGGVDLVIEAVFEEMSLKKQVFAELSAVCKPEAFLCTNTSALDVDEIASSTDRPHLVIGTHFFSPAHVMKLLEVIPSQYSSPTTIATVMNLSKKIKKIGVVVGNCFGFVGNRMLNPYYNQAYFLLEEGSKPEEVDQVLEEFGFKMGPFRVSDLAGLDVGWKSRKGQGLTGPTLLPGTPARKRGNRRYCPIPDVLCELGRFGQKTGKGWYQYDKPLGRIHKPDPWLSKFLSRYRKTHHIEPRTISQDEILERCLYSLINEAFRILGEGIAASPEHIDVVYLHGYGWPRHKGGPMFYASTVGLPTVLEKLQKYYRQNPDIPQLEPSDYLKKLASQGNPPLKEWQSLAGSPSSKL.

The tract at residues 1–282 (MAEYTRLHNA…FAERKANKWS (282 aa)) is enoyl-CoA hydratase / isomerase. The residue at position 38 (Lys-38) is an N6-succinyllysine. Gly-101 provides a ligand contact to substrate. An N6-acetyllysine; alternate modification is found at Lys-165. Lys-165 carries the N6-succinyllysine; alternate modification. At Lys-171 the chain carries N6-acetyllysine. Lys-219 is modified (N6-acetyllysine; alternate). Residue Lys-219 is modified to N6-succinyllysine; alternate. N6-acetyllysine is present on Lys-250. Residues Lys-280 and Lys-290 each carry the N6-succinyllysine modification. The 3-hydroxyacyl-CoA dehydrogenase stretch occupies residues 283–572 (TPSGASWKTA…DVLCELGRFG (290 aa)). An N6-acetyllysine mark is found at Lys-346, Lys-350, and Lys-464. At Lys-532 the chain carries N6-succinyllysine. Residue Thr-548 is modified to Phosphothreonine. N6-succinyllysine is present on Lys-577. N6-acetyllysine; alternate is present on residues Lys-584, Lys-591, and Lys-710. Lys-584, Lys-591, and Lys-710 each carry N6-succinyllysine; alternate. At Ser-718 the chain carries Phosphoserine. The Microbody targeting signal motif lies at 721-723 (SKL). At Lys-722 the chain carries N6-succinyllysine.

This sequence in the N-terminal section; belongs to the enoyl-CoA hydratase/isomerase family. The protein in the C-terminal section; belongs to the 3-hydroxyacyl-CoA dehydrogenase family. In terms of assembly, monomer. Acetylated, leading to enhanced enzyme activity. Acetylation is enhanced by up to 80% after treatment either with trichostin A (TSA) or with nicotinamide (NAM) with highest increase on Lys-346. Acetylation and enzyme activity increased by about 1.5% on addition of fatty acids. Liver and kidney. Strongly expressed in the terminal segments of the proximal tubule. Lower amounts seen in the brain.

The protein localises to the peroxisome. It catalyses the reaction a (3S)-3-hydroxyacyl-CoA = a (2E)-enoyl-CoA + H2O. The enzyme catalyses a 4-saturated-(3S)-3-hydroxyacyl-CoA = a (3E)-enoyl-CoA + H2O. It carries out the reaction a (3Z)-enoyl-CoA = a 4-saturated (2E)-enoyl-CoA. The catalysed reaction is a (3E)-enoyl-CoA = a 4-saturated (2E)-enoyl-CoA. It catalyses the reaction a (3S)-3-hydroxyacyl-CoA + NAD(+) = a 3-oxoacyl-CoA + NADH + H(+). The enzyme catalyses (2S,3S)-3-hydroxy-2-methylbutanoyl-CoA = (2E)-2-methylbut-2-enoyl-CoA + H2O. It carries out the reaction (3S)-hydroxyhexadecanoyl-CoA + NAD(+) = 3-oxohexadecanoyl-CoA + NADH + H(+). The catalysed reaction is (3S)-hydroxyhexadecanoyl-CoA = (2E)-hexadecenoyl-CoA + H2O. It catalyses the reaction (2E)-hexadecenedioyl-CoA + H2O = (3S)-hydroxyhexadecanedioyl-CoA. The enzyme catalyses (3S)-hydroxyhexadecanedioyl-CoA + NAD(+) = 3-oxohexadecanedioyl-CoA + NADH + H(+). It carries out the reaction (3E,5Z)-tetradecadienoyl-CoA = (2E,5Z)-tetradecadienoyl-CoA. The catalysed reaction is (3E,5Z)-octadienoyl-CoA = (2E,5Z)-octadienoyl-CoA. It catalyses the reaction (3S)-hydroxydecanoyl-CoA + NAD(+) = 3-oxodecanoyl-CoA + NADH + H(+). The enzyme catalyses (3E)-decenoyl-CoA = (2E)-decenoyl-CoA. It carries out the reaction (3Z)-hexenoyl-CoA = (2E)-hexenoyl-CoA. The catalysed reaction is (3E)-hexenoyl-CoA = (2E)-hexenoyl-CoA. It catalyses the reaction (3S)-hydroxydecanoyl-CoA = (2E)-decenoyl-CoA + H2O. The enzyme catalyses (3S)-hydroxyhexanoyl-CoA = (2E)-hexenoyl-CoA + H2O. The protein operates within lipid metabolism; fatty acid beta-oxidation. With respect to regulation, enzyme activity enhanced by acetylation. Peroxisomal trifunctional enzyme possessing 2-enoyl-CoA hydratase, 3-hydroxyacyl-CoA dehydrogenase, and delta 3, delta 2-enoyl-CoA isomerase activities. Catalyzes two of the four reactions of the long chain fatty acids peroxisomal beta-oxidation pathway. Can also use branched-chain fatty acids such as 2-methyl-2E-butenoyl-CoA as a substrate, which is hydrated into (2S,3S)-3-hydroxy-2-methylbutanoyl-CoA. Optimal isomerase for 2,5 double bonds into 3,5 form isomerization in a range of enoyl-CoA species. Also able to isomerize both 3-cis and 3-trans double bonds into the 2-trans form in a range of enoyl-CoA species. With HSD17B4, catalyzes the hydration of trans-2-enoyl-CoA and the dehydrogenation of 3-hydroxyacyl-CoA, but with opposite chiral specificity. Regulates the amount of medium-chain dicarboxylic fatty acids which are essential regulators of all fatty acid oxidation pathways. Also involved in the degradation of long-chain dicarboxylic acids through peroxisomal beta-oxidation. The chain is Peroxisomal bifunctional enzyme from Homo sapiens (Human).